We begin with the raw amino-acid sequence, 1243 residues long: Membrane-associated phosphatidylinositol transfer protein 1 (1243 aa).

Residues Thr-59, Thr-282, and Thr-287 each carry the phosphothreonine modification. Residues 259–330 (CNTGSEGPEA…HGGGVSPQSL (72 aa)) are disordered. The span at 271-283 (PGKSSTEARPGTS) shows a compositional bias: polar residues. Residues 299-319 (ASPDASFGKQWSSSSRSSYSS) are compositionally biased toward low complexity. A phosphoserine mark is found at Ser-300, Ser-304, Ser-319, Ser-326, Ser-329, Ser-342, Ser-345, Ser-346, and Ser-373. Ser-382 is subject to Phosphoserine; by CDK1. Positions 581–593 (AGPGSRGSSRRGS) are enriched in low complexity. The segment at 581 to 679 (AGPGSRGSSR…PASSEAPDGP (99 aa)) is disordered. Phosphoserine is present on residues Ser-593, Ser-600, and Ser-621. The span at 643–658 (GSQNSLQVASTATSSG) shows a compositional bias: polar residues. The region spanning 684 to 878 (RLDFKVSGFF…VVAFILRQVI (195 aa)) is the DDHD domain. Ser-895 is subject to Phosphoserine. Positions 1206-1243 (LLRSRGPSQVDREGPGTPPTTLARGKTRSISLKLDSEE) are disordered. Omega-N-methylarginine is present on residues Arg-1210 and Arg-1217. Ser-1236 carries the post-translational modification Phosphoserine.

It belongs to the PtdIns transfer protein family. PI transfer class IIA subfamily. As to quaternary structure, interacts with PTK2B via its C-terminus. Interacts with RHOA. Has higher affinity for the inactive, GDP-bound form of RHOA. The CDK1-phosphorylated form interacts with PLK1. Interacts with VAPB and PIK4CA. In terms of processing, phosphorylated on multiple sites by CDK1 at the onset of mitosis. Phosphorylation facilitates dissociation from the Golgi complex and is required for interaction with PLK1. Post-translationally, phosphorylated on threonine residues upon treatment with oleic acid. Phosphorylated on tyrosine residues by PTK2B. Detected at high levels in brain, and at lower levels in lung, kidney, spleen and liver (at protein level). Ubiquitous. Highly expressed in embryonic retina and the central nervous system.

Its subcellular location is the cytoplasm. It localises to the golgi apparatus. It is found in the golgi stack membrane. The protein localises to the endoplasmic reticulum membrane. The protein resides in the lipid droplet. Its subcellular location is the cleavage furrow. It localises to the midbody. The enzyme catalyses a 1,2-diacyl-sn-glycero-3-phospho-(1D-myo-inositol)(in) = a 1,2-diacyl-sn-glycero-3-phospho-(1D-myo-inositol)(out). Catalyzes the transfer of phosphatidylinositol (PI) between membranes. Binds PI. Also binds phosphatidylcholine (PC) and phosphatidic acid (PA) with the binding affinity order of PI &gt; PA &gt; PC. Regulates RHOA activity, and plays a role in cytoskeleton remodeling. Necessary for normal completion of cytokinesis. Plays a role in maintaining normal diacylglycerol levels in the Golgi apparatus. Necessary for maintaining the normal structure of the endoplasmic reticulum and the Golgi apparatus. Required for protein export from the endoplasmic reticulum and the Golgi. Binds calcium ions. The sequence is that of Membrane-associated phosphatidylinositol transfer protein 1 (Pitpnm1) from Mus musculus (Mouse).